A 1458-amino-acid polypeptide reads, in one-letter code: RNA-directed RNA polymerase P1 (1458 aa).

The tract at residues 148–168 (LSQDDRDEKGNDNREEEDVKN) is disordered. In terms of domain architecture, RdRp catalytic spans 686 to 894 (VGIGFATIYQ…KTVISHISGE (209 aa)). The segment at 971 to 993 (DESIENKPNRRGSKAKARSTKTN) is disordered. Residues 979–989 (NRRGSKAKARS) are compositionally biased toward basic residues.

This sequence belongs to the reoviridae RNA-directed RNA polymerase family.

The protein localises to the virion. Its subcellular location is the host cytoplasm. The catalysed reaction is RNA(n) + a ribonucleoside 5'-triphosphate = RNA(n+1) + diphosphate. RNA-directed RNA polymerase that is involved in both transcription and genome replication. Together with the capping enzyme P5 and protein P7, forms an enzyme complex positioned near the channels situated at each of the five-fold vertices of the core. The chain is RNA-directed RNA polymerase P1 from Nephotettix cincticeps (Green rice leafhopper).